The chain runs to 295 residues: Ribosomal protein L11 methyltransferase (295 aa).

The S-adenosyl-L-methionine site is built by Thr145, Gly166, Asp188, and Asn230.

This sequence belongs to the methyltransferase superfamily. PrmA family.

It localises to the cytoplasm. The enzyme catalyses L-lysyl-[protein] + 3 S-adenosyl-L-methionine = N(6),N(6),N(6)-trimethyl-L-lysyl-[protein] + 3 S-adenosyl-L-homocysteine + 3 H(+). In terms of biological role, methylates ribosomal protein L11. In Shewanella amazonensis (strain ATCC BAA-1098 / SB2B), this protein is Ribosomal protein L11 methyltransferase.